The sequence spans 424 residues: Phosphomethylpyrimidine synthase 2 (424 aa).

Residues Asn-65, Met-94, Tyr-123, His-162, 184–186 (SRG), 225–228 (DGLR), and Glu-264 contribute to the substrate site. His-268 contacts Zn(2+). A substrate-binding site is contributed by Tyr-291. His-332 is a Zn(2+) binding site. The [4Fe-4S] cluster site is built by Cys-408, Cys-411, and Cys-415.

Belongs to the ThiC family. [4Fe-4S] cluster serves as cofactor.

It catalyses the reaction 5-amino-1-(5-phospho-beta-D-ribosyl)imidazole + S-adenosyl-L-methionine = 4-amino-2-methyl-5-(phosphooxymethyl)pyrimidine + CO + 5'-deoxyadenosine + formate + L-methionine + 3 H(+). The protein operates within cofactor biosynthesis; thiamine diphosphate biosynthesis. In terms of biological role, catalyzes the synthesis of the hydroxymethylpyrimidine phosphate (HMP-P) moiety of thiamine from aminoimidazole ribotide (AIR) in a radical S-adenosyl-L-methionine (SAM)-dependent reaction. The polypeptide is Phosphomethylpyrimidine synthase 2 (Methanothermobacter thermautotrophicus (strain ATCC 29096 / DSM 1053 / JCM 10044 / NBRC 100330 / Delta H) (Methanobacterium thermoautotrophicum)).